Here is a 100-residue protein sequence, read N- to C-terminus: MGFNNLVSLAALIEKVFPIRYTPAGIPVLDIILKHESWQEENGQQCLVQLEIPARILGRQAEEWQYRQGVYVHVEGFLAQKSRRSLMPMLRIQNIQEYKG.

An SSB domain is found at 1 to 99; that stretch reads MGFNNLVSLA…LRIQNIQEYK (99 aa).

The protein belongs to the PriB family. Homodimer. Interacts with PriA and DnaT. Component of the replication restart primosome. Primosome assembly occurs via a 'hand-off' mechanism. PriA binds to replication forks, subsequently PriB then DnaT bind; DnaT then displaces ssDNA to generate the helicase loading substrate.

Involved in the restart of stalled replication forks, which reloads the replicative helicase on sites other than the origin of replication; the PriA-PriB pathway is the major replication restart pathway. During primosome assembly it facilitates complex formation between PriA and DnaT on DNA; stabilizes PriA on DNA. Stimulates the DNA unwinding activity of PriA helicase. The polypeptide is Replication restart protein PriB (Neisseria meningitidis serogroup B (strain ATCC BAA-335 / MC58)).